Consider the following 133-residue polypeptide: Ribonuclease P protein component (133 aa).

Belongs to the RnpA family. Consists of a catalytic RNA component (M1 or rnpB) and a protein subunit.

The catalysed reaction is Endonucleolytic cleavage of RNA, removing 5'-extranucleotides from tRNA precursor.. Its function is as follows. RNaseP catalyzes the removal of the 5'-leader sequence from pre-tRNA to produce the mature 5'-terminus. It can also cleave other RNA substrates such as 4.5S RNA. The protein component plays an auxiliary but essential role in vivo by binding to the 5'-leader sequence and broadening the substrate specificity of the ribozyme. This chain is Ribonuclease P protein component, found in Bartonella quintana (strain Toulouse) (Rochalimaea quintana).